A 386-amino-acid polypeptide reads, in one-letter code: NADPH-dependent alkenal/one oxidoreductase, chloroplastic (386 aa).

Belongs to the zinc-containing alcohol dehydrogenase family. Quinone oxidoreductase subfamily.

The protein resides in the plastid. It localises to the chloroplast. Its function is as follows. Reduces the double bond in short-chain unsaturated carbonyls. Acts preferentially on alpha,beta-unsaturated ketones rather on alpha,beta-unsaturated aldehydes. Has no activity with (E)-2-hexenal and (E)-2-pentenal. Contributes to detoxify stromal reactive carbonyls produced under oxidative stress. This Arabidopsis thaliana (Mouse-ear cress) protein is NADPH-dependent alkenal/one oxidoreductase, chloroplastic.